A 413-amino-acid chain; its full sequence is Serine hydroxymethyltransferase (413 aa).

Residues Leu117 and 121-123 (GHL) each bind (6S)-5,6,7,8-tetrahydrofolate. The residue at position 226 (Lys226) is an N6-(pyridoxal phosphate)lysine. (6S)-5,6,7,8-tetrahydrofolate contacts are provided by residues Glu239 and 349–351 (SPF).

Belongs to the SHMT family. Homodimer. Pyridoxal 5'-phosphate serves as cofactor.

It localises to the cytoplasm. It catalyses the reaction (6R)-5,10-methylene-5,6,7,8-tetrahydrofolate + glycine + H2O = (6S)-5,6,7,8-tetrahydrofolate + L-serine. It participates in one-carbon metabolism; tetrahydrofolate interconversion. Its pathway is amino-acid biosynthesis; glycine biosynthesis; glycine from L-serine: step 1/1. Catalyzes the reversible interconversion of serine and glycine with tetrahydrofolate (THF) serving as the one-carbon carrier. This reaction serves as the major source of one-carbon groups required for the biosynthesis of purines, thymidylate, methionine, and other important biomolecules. Also exhibits THF-independent aldolase activity toward beta-hydroxyamino acids, producing glycine and aldehydes, via a retro-aldol mechanism. The protein is Serine hydroxymethyltransferase of Bacillus anthracis (strain A0248).